The chain runs to 160 residues: Vegetative-specific protein V4 (160 aa).

3 consecutive repeat copies span residues Asn-151–Pro-153, Asn-154–Pro-156, and Asn-157–Gly-159. Residues Asn-151–Gly-159 form a 3 X 3 AA tandem repeats of N-Q-[PG] region.

Its function is as follows. Unknown. Its expression during growth is not required for growth but for the proper initiation of development, therefore playing a role in the transition from growth to development. The chain is Vegetative-specific protein V4 (lmcB) from Dictyostelium discoideum (Social amoeba).